Here is a 228-residue protein sequence, read N- to C-terminus: L-ribulose-5-phosphate 4-epimerase UlaF (228 aa).

Substrate is bound by residues 26 to 27 (GN), 43 to 44 (SG), and 72 to 73 (SS). Residues aspartate 74, histidine 93, and histidine 95 each contribute to the Zn(2+) site. Residue aspartate 118 is the Proton donor/acceptor of the active site. Histidine 167 serves as a coordination point for Zn(2+). Catalysis depends on tyrosine 225, which acts as the Proton donor/acceptor.

This sequence belongs to the aldolase class II family. AraD/FucA subfamily. Requires Zn(2+) as cofactor.

It carries out the reaction L-ribulose 5-phosphate = D-xylulose 5-phosphate. It participates in cofactor degradation; L-ascorbate degradation; D-xylulose 5-phosphate from L-ascorbate: step 4/4. Catalyzes the isomerization of L-ribulose 5-phosphate to D-xylulose 5-phosphate. Is involved in the anaerobic L-ascorbate utilization. This Escherichia coli O17:K52:H18 (strain UMN026 / ExPEC) protein is L-ribulose-5-phosphate 4-epimerase UlaF.